The sequence spans 111 residues: uncharacterized protein (111 aa).

The next 3 membrane-spanning stretches (helical) occupy residues 4–22 (FWIL…QFFI), 49–71 (LLIL…LFFI), and 91–108 (YMYH…LIYV).

Its subcellular location is the cell membrane. This is an uncharacterized protein from Bacillus subtilis (strain 168).